The sequence spans 207 residues: Octanoyltransferase (207 aa).

The region spanning A27–A203 is the BPL/LPL catalytic domain. Residues R66–H73, S133–G135, and G146–A148 each bind substrate. C164 functions as the Acyl-thioester intermediate in the catalytic mechanism.

It belongs to the LipB family.

The protein resides in the cytoplasm. The enzyme catalyses octanoyl-[ACP] + L-lysyl-[protein] = N(6)-octanoyl-L-lysyl-[protein] + holo-[ACP] + H(+). It functions in the pathway protein modification; protein lipoylation via endogenous pathway; protein N(6)-(lipoyl)lysine from octanoyl-[acyl-carrier-protein]: step 1/2. In terms of biological role, catalyzes the transfer of endogenously produced octanoic acid from octanoyl-acyl-carrier-protein onto the lipoyl domains of lipoate-dependent enzymes. Lipoyl-ACP can also act as a substrate although octanoyl-ACP is likely to be the physiological substrate. The protein is Octanoyltransferase of Neisseria gonorrhoeae (strain ATCC 700825 / FA 1090).